We begin with the raw amino-acid sequence, 446 residues long: MTTLTLVLTAVGSVLLLLFLVMKARMHAFLALMVVSMGAGLFSGMPLDKIAATMEKGMGGTLGFLAVVVALGAMFGKILHETGAVDQIAVKMLKSFGHSRAHYAIGLAGLVCALPLFFEVAIVLLISVAFSMARHTGTNLVKLVIPLFAGVAAAAAFLVPGPAPMLLASQMNADFGWMILIGLCAAIPGMIIAGPLWGNFISRYVELHIPDDISEPHLGEGKMPSFGFSLSLILLPLVLVGLKTIAARFVPEGSTAYEWFEFIGHPFTAILVACLVAIYGLAMRQGMPKDKVMEICGHALQPAGIILLVIGAGGVFKQVLVDSGVGPALGEALTGMGLPIAITCFVLAAAVRIIQGSATVACLTAVGLVMPVIEQLNYSGAQMAALSICIAGGSIVVSHVNDAGFWLFGKFTGATEAETLKTWTMMETILGTVGAIVGMIAFQLLS.

Met1 is a topological domain (cytoplasmic). Residues 2 to 22 traverse the membrane as a helical segment; the sequence is TTLTLVLTAVGSVLLLLFLVM. The Periplasmic portion of the chain corresponds to 23–26; sequence KARM. A helical transmembrane segment spans residues 27 to 47; that stretch reads HAFLALMVVSMGAGLFSGMPL. At 48-58 the chain is on the cytoplasmic side; that stretch reads DKIAATMEKGM. The helical transmembrane segment at 59–79 threads the bilayer; it reads GGTLGFLAVVVALGAMFGKIL. At 80–109 the chain is on the periplasmic side; it reads HETGAVDQIAVKMLKSFGHSRAHYAIGLAG. A helical transmembrane segment spans residues 110–130; it reads LVCALPLFFEVAIVLLISVAF. Topologically, residues 131–142 are cytoplasmic; it reads SMARHTGTNLVK. The chain crosses the membrane as a helical span at residues 143-163; the sequence is LVIPLFAGVAAAAAFLVPGPA. Topologically, residues 164–176 are periplasmic; the sequence is PMLLASQMNADFG. A helical membrane pass occupies residues 177-197; sequence WMILIGLCAAIPGMIIAGPLW. Topologically, residues 198–225 are cytoplasmic; that stretch reads GNFISRYVELHIPDDISEPHLGEGKMPS. The chain crosses the membrane as a helical span at residues 226–246; sequence FGFSLSLILLPLVLVGLKTIA. The Periplasmic portion of the chain corresponds to 247–261; the sequence is ARFVPEGSTAYEWFE. Residues 262 to 282 traverse the membrane as a helical segment; it reads FIGHPFTAILVACLVAIYGLA. Topologically, residues 283–294 are cytoplasmic; that stretch reads MRQGMPKDKVME. The helical transmembrane segment at 295 to 315 threads the bilayer; it reads ICGHALQPAGIILLVIGAGGV. The Periplasmic segment spans residues 316–330; sequence FKQVLVDSGVGPALG. The chain crosses the membrane as a helical span at residues 331–351; the sequence is EALTGMGLPIAITCFVLAAAV. A topological domain (cytoplasmic) is located at residue Arg352. Residues 353–373 form a helical membrane-spanning segment; sequence IIQGSATVACLTAVGLVMPVI. Residues 374–387 are Periplasmic-facing; that stretch reads EQLNYSGAQMAALS. The chain crosses the membrane as a helical span at residues 388-408; it reads ICIAGGSIVVSHVNDAGFWLF. Topologically, residues 409 to 424 are cytoplasmic; that stretch reads GKFTGATEAETLKTWT. Residues 425–445 form a helical membrane-spanning segment; the sequence is MMETILGTVGAIVGMIAFQLL. Position 446 (Ser446) is a topological domain, periplasmic.

The protein belongs to the GntP permease family.

It localises to the cell inner membrane. In terms of biological role, part of the gluconate utilization system Gnt-I; low-affinity intake of gluconate. This chain is Low-affinity gluconate transporter (gntU), found in Escherichia coli O157:H7.